Reading from the N-terminus, the 131-residue chain is MDVEIFPHRLLSAETTEKLLNKLGEIEGIKRMIIQGQRLPAGEHPDRRVINVKGQDIELKVKTGRIFVEIEDKKTMEKIKEVCDEVFPFKYELIPGTFFRRQKTVTDAIKFGKDVDKLPTELVGMTDTVLD.

As to quaternary structure, MCR is composed of three subunits: alpha, beta, and gamma. The function of proteins C and D is not known.

The sequence is that of Methyl-coenzyme M reductase operon protein D (mcrD) from Methanothermus fervidus.